The primary structure comprises 118 residues: Beta-2-microglobulin (118 aa).

A signal peptide spans 1 to 20 (MARFVALVLLGLLSLSGLDA). Residues 25-112 (PKIQVYSRHP…HVTLEQPRIV (88 aa)) form the Ig-like C1-type domain. A disulfide bridge connects residues cysteine 45 and cysteine 99.

This sequence belongs to the beta-2-microglobulin family. Heterodimer of an alpha chain and a beta chain. Beta-2-microglobulin is the beta-chain of major histocompatibility complex class I molecules. Forms a heterotrimer with MR1 and a metabolite antigen.

It localises to the secreted. Its function is as follows. Component of the class I major histocompatibility complex (MHC). Involved in the presentation of peptide antigens to the immune system. The sequence is that of Beta-2-microglobulin (B2M) from Bos taurus (Bovine).